The primary structure comprises 229 residues: Large ribosomal subunit protein uL4 (229 aa).

Residues 62–103 form a disordered region; the sequence is SRRQGTHQVKNRAAVSGSGKKPWKQKGTGRARHSSRRSPIWV. Basic residues predominate over residues 82–97; that stretch reads KPWKQKGTGRARHSSR.

The protein belongs to the universal ribosomal protein uL4 family. Part of the 50S ribosomal subunit.

Its function is as follows. One of the primary rRNA binding proteins, this protein initially binds near the 5'-end of the 23S rRNA. It is important during the early stages of 50S assembly. It makes multiple contacts with different domains of the 23S rRNA in the assembled 50S subunit and ribosome. Functionally, forms part of the polypeptide exit tunnel. In Mycoplasmopsis synoviae (strain 53) (Mycoplasma synoviae), this protein is Large ribosomal subunit protein uL4.